Reading from the N-terminus, the 590-residue chain is 2-isopropylmalate synthase (590 aa).

A Pyruvate carboxyltransferase domain is found at 40–314 (PRWCAVDLRD…DPQIDFSDID (275 aa)). Mg(2+)-binding residues include aspartate 49, histidine 253, histidine 255, and asparagine 289. The regulatory domain stretch occupies residues 456–590 (APETESDAKW…SSVPAELAGV (135 aa)).

It belongs to the alpha-IPM synthase/homocitrate synthase family. LeuA type 2 subfamily. Homodimer. Mg(2+) serves as cofactor.

The protein localises to the cytoplasm. The enzyme catalyses 3-methyl-2-oxobutanoate + acetyl-CoA + H2O = (2S)-2-isopropylmalate + CoA + H(+). The protein operates within amino-acid biosynthesis; L-leucine biosynthesis; L-leucine from 3-methyl-2-oxobutanoate: step 1/4. In terms of biological role, catalyzes the condensation of the acetyl group of acetyl-CoA with 3-methyl-2-oxobutanoate (2-ketoisovalerate) to form 3-carboxy-3-hydroxy-4-methylpentanoate (2-isopropylmalate). This is 2-isopropylmalate synthase from Leifsonia xyli subsp. xyli (strain CTCB07).